The chain runs to 563 residues: Arginine--tRNA ligase (563 aa).

Residues Ala-119–Arg-129 carry the 'HIGH' region motif.

It belongs to the class-I aminoacyl-tRNA synthetase family.

It is found in the cytoplasm. It carries out the reaction tRNA(Arg) + L-arginine + ATP = L-arginyl-tRNA(Arg) + AMP + diphosphate. This is Arginine--tRNA ligase from Methanocella arvoryzae (strain DSM 22066 / NBRC 105507 / MRE50).